Reading from the N-terminus, the 278-residue chain is Small ribosomal subunit protein uS5 (278 aa).

The segment at 1–43 is disordered; sequence MADAPAPAGGRGGFRGGFGGRGRGRGRGRGRGRGRGRGAKDGD. The span at 9–21 shows a compositional bias: gly residues; the sequence is GGRGGFRGGFGGR. Basic residues predominate over residues 22-37; that stretch reads GRGRGRGRGRGRGRGR. The S5 DRBM domain occupies 88 to 151; that stretch reads LKDEVLKIMP…ILAKLSVVPV (64 aa).

It belongs to the universal ribosomal protein uS5 family.

Component of the ribosome, a large ribonucleoprotein complex responsible for the synthesis of proteins in the cell. The small ribosomal subunit (SSU) binds messenger RNAs (mRNAs) and translates the encoded message by selecting cognate aminoacyl-transfer RNA (tRNA) molecules. The large subunit (LSU) contains the ribosomal catalytic site termed the peptidyl transferase center (PTC), which catalyzes the formation of peptide bonds, thereby polymerizing the amino acids delivered by tRNAs into a polypeptide chain. The nascent polypeptides leave the ribosome through a tunnel in the LSU and interact with protein factors that function in enzymatic processing, targeting, and the membrane insertion of nascent chains at the exit of the ribosomal tunnel. Plays a role in the assembly and function of the 40S ribosomal subunit. Mutations in this protein affects the control of translational fidelity. Involved in nucleolar processing of pre-18S ribosomal RNA and ribosome assembly. This is Small ribosomal subunit protein uS5 (RPS2) from Urechis caupo (Innkeeper worm).